Reading from the N-terminus, the 305-residue chain is Ferredoxin--NADP reductase (305 aa).

Residues Glu-31, Tyr-42, Val-82, and Asp-274 each contribute to the FAD site.

This sequence belongs to the ferredoxin--NADP reductase type 2 family. As to quaternary structure, homodimer. FAD serves as cofactor.

The catalysed reaction is 2 reduced [2Fe-2S]-[ferredoxin] + NADP(+) + H(+) = 2 oxidized [2Fe-2S]-[ferredoxin] + NADPH. The protein is Ferredoxin--NADP reductase of Ignicoccus hospitalis (strain KIN4/I / DSM 18386 / JCM 14125).